The primary structure comprises 682 residues: Probable potassium transport system protein Kup (682 aa).

A run of 12 helical transmembrane segments spans residues 13–33 (GLLV…LYVM), 55–75 (ISLI…LIAL), 98–118 (WLVI…TLTP), 138–158 (IPVP…LFLF), 171–191 (TFGP…IMNL), 217–237 (VGVL…ALYS), 250–270 (SWPY…VWIL), 295–315 (FFAI…LITG), 344–364 (LFIP…VFLF), 375–395 (GLAI…YLSL), 405–425 (VFLL…LAKF), and 428–448 (GGYV…IWYF).

Belongs to the HAK/KUP transporter (TC 2.A.72) family.

The protein localises to the cell membrane. The enzyme catalyses K(+)(in) + H(+)(in) = K(+)(out) + H(+)(out). Functionally, transport of potassium into the cell. Likely operates as a K(+):H(+) symporter. The polypeptide is Probable potassium transport system protein Kup (Lactobacillus gasseri (strain ATCC 33323 / DSM 20243 / BCRC 14619 / CIP 102991 / JCM 1131 / KCTC 3163 / NCIMB 11718 / NCTC 13722 / AM63)).